A 199-amino-acid polypeptide reads, in one-letter code: MKHLVLASGNAGKLEELRAMLADLPLQIVAQGELGVDDVPETGLTFVENALIKARHASTVTGLPALADDSGLIVDALGGAPGLYSARYAGSPTDANANNAKLLEAMREIPAERRSARFYAVIVLLRHPEDPQPLIAEGSWEGVITTAPRGTGGFGYNPVFLDPVHGLTAAEMDTALKNRLSHRAVALATLQHKLHALSL.

8–13 lines the substrate pocket; sequence SGNAGK. The active-site Proton acceptor is the D69. Residue D69 coordinates Mg(2+). Residues S70, 154–157, K177, and 182–183 contribute to the substrate site; these read FGYN and HR.

It belongs to the HAM1 NTPase family. As to quaternary structure, homodimer. Requires Mg(2+) as cofactor.

The enzyme catalyses XTP + H2O = XMP + diphosphate + H(+). The catalysed reaction is dITP + H2O = dIMP + diphosphate + H(+). It catalyses the reaction ITP + H2O = IMP + diphosphate + H(+). Functionally, pyrophosphatase that catalyzes the hydrolysis of nucleoside triphosphates to their monophosphate derivatives, with a high preference for the non-canonical purine nucleotides XTP (xanthosine triphosphate), dITP (deoxyinosine triphosphate) and ITP. Seems to function as a house-cleaning enzyme that removes non-canonical purine nucleotides from the nucleotide pool, thus preventing their incorporation into DNA/RNA and avoiding chromosomal lesions. The protein is dITP/XTP pyrophosphatase of Xanthomonas campestris pv. campestris (strain 8004).